A 284-amino-acid polypeptide reads, in one-letter code: Bifunctional protein FolD (284 aa).

NADP(+) is bound by residues 164 to 166 (GRG), Thr189, and Ile230.

This sequence belongs to the tetrahydrofolate dehydrogenase/cyclohydrolase family. As to quaternary structure, homodimer.

The enzyme catalyses (6R)-5,10-methylene-5,6,7,8-tetrahydrofolate + NADP(+) = (6R)-5,10-methenyltetrahydrofolate + NADPH. It catalyses the reaction (6R)-5,10-methenyltetrahydrofolate + H2O = (6R)-10-formyltetrahydrofolate + H(+). The protein operates within one-carbon metabolism; tetrahydrofolate interconversion. Catalyzes the oxidation of 5,10-methylenetetrahydrofolate to 5,10-methenyltetrahydrofolate and then the hydrolysis of 5,10-methenyltetrahydrofolate to 10-formyltetrahydrofolate. The sequence is that of Bifunctional protein FolD from Pelotomaculum thermopropionicum (strain DSM 13744 / JCM 10971 / SI).